The sequence spans 498 residues: ATP synthase subunit beta, chloroplastic (498 aa).

172–179 (GGAGVGKT) contacts ATP.

Belongs to the ATPase alpha/beta chains family. As to quaternary structure, F-type ATPases have 2 components, CF(1) - the catalytic core - and CF(0) - the membrane proton channel. CF(1) has five subunits: alpha(3), beta(3), gamma(1), delta(1), epsilon(1). CF(0) has four main subunits: a(1), b(1), b'(1) and c(9-12).

The protein localises to the plastid. It localises to the chloroplast thylakoid membrane. It carries out the reaction ATP + H2O + 4 H(+)(in) = ADP + phosphate + 5 H(+)(out). Produces ATP from ADP in the presence of a proton gradient across the membrane. The catalytic sites are hosted primarily by the beta subunits. This is ATP synthase subunit beta, chloroplastic from Phalaenopsis aphrodite subsp. formosana (Moth orchid).